Here is a 264-residue protein sequence, read N- to C-terminus: V-type proton ATPase subunit D (264 aa).

Residues 214-230 are compositionally biased toward basic and acidic residues; it reads RDNAETDAQMKAKKAEQ. The tract at residues 214 to 264 is disordered; sequence RDNAETDAQMKAKKAEQQRLALADSENAEGEQTENTPADILAAEEDEDVIF. Residues 255–264 show a composition bias toward acidic residues; it reads AAEEDEDVIF.

Belongs to the V-ATPase D subunit family. In terms of assembly, V-ATPase is a heteromultimeric enzyme composed of a peripheral catalytic V1 complex (components A to H) attached to an integral membrane V0 proton pore complex (components: a, c, c', c'', d, e, f and VOA1).

The protein resides in the vacuole membrane. Its function is as follows. Subunit of the V1 complex of vacuolar(H+)-ATPase (V-ATPase), a multisubunit enzyme composed of a peripheral complex (V1) that hydrolyzes ATP and a membrane integral complex (V0) that translocates protons. V-ATPase is responsible for acidifying and maintaining the pH of intracellular compartments. This Neurospora crassa (strain ATCC 24698 / 74-OR23-1A / CBS 708.71 / DSM 1257 / FGSC 987) protein is V-type proton ATPase subunit D (vma-8).